The sequence spans 282 residues: MATYLIGDVHGCYDELIALLHKVEFTPGKDTLWLTGDLVARGPGSLDVLRYVKSLGDSVRLVLGNHDLHLLAVFAGISRNKPKDRLTPLLEAPDADELLNWLRRQPLLQIDEEKKLVMAHAGITPQWDLQTAKECARDVEAVLSSDSYPFFLDAMYGDMPNNWSPELRGLGRLRFITNAFTRMRFCFPNGQLDMYSKESPEEAPAPLKPWFAIPGPVAEEYNIAFGHWASLEGKGTPEGIYALDTGCCWGGTLTCLRWEDKQYFVQPSNRHKDLSEGEAVAS.

Belongs to the Ap4A hydrolase family.

It catalyses the reaction P(1),P(4)-bis(5'-adenosyl) tetraphosphate + H2O = 2 ADP + 2 H(+). Hydrolyzes diadenosine 5',5'''-P1,P4-tetraphosphate to yield ADP. The protein is Bis(5'-nucleosyl)-tetraphosphatase, symmetrical of Escherichia coli O81 (strain ED1a).